The chain runs to 401 residues: MKYDRILIRYGEMTTKGRNRNLFVRRLKDNVAKKLHAFQNIKIEYMRDRMYILLNGEPHEPIIDKLKNVFGIHSFSLAMKCHNELNEIKETALAAVKQLPHEGKTFKISARRVDKQFPYGSSELNYEIGAHILRNTDGLTVNVHDPDIDVRVEVRQEGTYITCHDIPGPGGLPVGSSGKAMLMLSGGIDSPVAGYLAMKRGLEIEAVHFFSPPFTSDRAKQKVIDLVKKLTTYGGKIKLHIVPFTEVQQAIYTQVPNEYSLISTRRAMLKITDALRQRHRALAIVTGESLGQVASQTLESMFVINDVTTTPILRPLVSMDKIEIIDIAKKIDTHDISILPYEDCCTIFTPRSPKTKPKKEKVVHYESFVDLQPLIEKAIANTETMVIDEHSATEDEFEQLF.

Positions 60-165 (EPIIDKLKNV…QEGTYITCHD (106 aa)) constitute a THUMP domain. Residues 183 to 184 (ML), 208 to 209 (HF), Arg-265, Gly-287, and Gln-296 contribute to the ATP site.

Belongs to the ThiI family.

The protein localises to the cytoplasm. The enzyme catalyses [ThiI sulfur-carrier protein]-S-sulfanyl-L-cysteine + a uridine in tRNA + 2 reduced [2Fe-2S]-[ferredoxin] + ATP + H(+) = [ThiI sulfur-carrier protein]-L-cysteine + a 4-thiouridine in tRNA + 2 oxidized [2Fe-2S]-[ferredoxin] + AMP + diphosphate. The catalysed reaction is [ThiS sulfur-carrier protein]-C-terminal Gly-Gly-AMP + S-sulfanyl-L-cysteinyl-[cysteine desulfurase] + AH2 = [ThiS sulfur-carrier protein]-C-terminal-Gly-aminoethanethioate + L-cysteinyl-[cysteine desulfurase] + A + AMP + 2 H(+). The protein operates within cofactor biosynthesis; thiamine diphosphate biosynthesis. Catalyzes the ATP-dependent transfer of a sulfur to tRNA to produce 4-thiouridine in position 8 of tRNAs, which functions as a near-UV photosensor. Also catalyzes the transfer of sulfur to the sulfur carrier protein ThiS, forming ThiS-thiocarboxylate. This is a step in the synthesis of thiazole, in the thiamine biosynthesis pathway. The sulfur is donated as persulfide by IscS. The chain is Probable tRNA sulfurtransferase from Geobacillus sp. (strain WCH70).